We begin with the raw amino-acid sequence, 231 residues long: Protein N-terminal glutamine amidohydrolase (231 aa).

Residues 1–21 (MADDRVAGGATPPPPPPPPPL) are disordered. The segment covering 11 to 21 (TPPPPPPPPPL) has biased composition (pro residues). Active-site residues include C33, H89, and D108.

This sequence belongs to the NTAQ1 family. As to quaternary structure, monomer.

It catalyses the reaction N-terminal L-glutaminyl-[protein] + H2O = N-terminal L-glutamyl-[protein] + NH4(+). Its function is as follows. Mediates the side-chain deamidation of N-terminal glutamine residues to glutamate, an important step in N-end rule pathway of protein degradation. Conversion of the resulting N-terminal glutamine to glutamate renders the protein susceptible to arginylation, polyubiquitination and degradation as specified by the N-end rule. Does not act on substrates with internal or C-terminal glutamine and does not act on non-glutamine residues in any position. The sequence is that of Protein N-terminal glutamine amidohydrolase from Oryza sativa subsp. indica (Rice).